Consider the following 568-residue polypeptide: Protein disconnected (568 aa).

Residues 16 to 77 (GHGPHSHQHV…PRRWGSPPIN (62 aa)) form a disordered region. Residues 19–29 (PHSHQHVHSHL) are compositionally biased toward basic residues. A compositionally biased stretch (low complexity) spans 30 to 45 (PSHPQPNAASPASSPG). The span at 46-62 (GSSGSGSGSAAGSGTGS) shows a compositional bias: gly residues. 2 consecutive C2H2-type zinc fingers follow at residues 92–115 (VQCS…SAVH) and 120–145 (HKCT…ANPN). Disordered regions lie at residues 134-157 (RRSR…RRKI), 220-364 (LLST…SDAF), 391-419 (SSAS…DSDS), and 501-568 (QQYN…PISV). Over residues 235–246 (NEQDADPEDDND) the composition is skewed to acidic residues. Residues 253 to 263 (QANSSSPAASS) show a composition bias toward polar residues. Residues 282 to 292 (SLSLASSSSIA) show a composition bias toward low complexity. Residues 313-360 (SEQDREQEQEQEQEREREAEKEQEQDVESDKEHEPEQEHELEREKRSP) are compositionally biased toward basic and acidic residues. Positions 391 to 402 (SSASSSSASASA) are enriched in low complexity. The segment covering 520-550 (HLTLSHHHQEQHHHLGHHHMGHHHHHHHQHH) has biased composition (basic residues). The span at 558 to 568 (SPAATNAPISV) shows a compositional bias: polar residues.

As to expression, expressed at low levels in the adult head and very low, but detectable, levels in the body.

Its subcellular location is the nucleus. Functionally, required for the establishment of stable connections between the larval optic nerves, the Bolwig's nerves, and their target cells in the brain during embryonic development. In Drosophila melanogaster (Fruit fly), this protein is Protein disconnected (disco).